The sequence spans 244 residues: uncharacterized protein (244 aa).

It belongs to the MtxX family.

This is an uncharacterized protein from Methanocaldococcus jannaschii (strain ATCC 43067 / DSM 2661 / JAL-1 / JCM 10045 / NBRC 100440) (Methanococcus jannaschii).